Reading from the N-terminus, the 123-residue chain is Small ribosomal subunit protein uS12 (123 aa).

A disordered region spans residues 1 to 28 (MPTIQQLIRKPRQPKVKRSKSQHLEQCP). A compositionally biased stretch (basic residues) spans 9 to 21 (RKPRQPKVKRSKS). 3-methylthioaspartic acid is present on D89.

The protein belongs to the universal ribosomal protein uS12 family. In terms of assembly, part of the 30S ribosomal subunit. Contacts proteins S8 and S17. May interact with IF1 in the 30S initiation complex.

Functionally, with S4 and S5 plays an important role in translational accuracy. In terms of biological role, interacts with and stabilizes bases of the 16S rRNA that are involved in tRNA selection in the A site and with the mRNA backbone. Located at the interface of the 30S and 50S subunits, it traverses the body of the 30S subunit contacting proteins on the other side and probably holding the rRNA structure together. The combined cluster of proteins S8, S12 and S17 appears to hold together the shoulder and platform of the 30S subunit. The chain is Small ribosomal subunit protein uS12 from Ruegeria pomeroyi (strain ATCC 700808 / DSM 15171 / DSS-3) (Silicibacter pomeroyi).